The primary structure comprises 374 residues: Secondary metabolism regulator laeA (374 aa).

The segment at 1 to 75 is disordered; sequence MFEMGPVGTR…NRNGSPSMSP (75 aa). The span at 23–40 shows a compositional bias: polar residues; the sequence is SYHSPTSSDRGRSRQNSD. Met-207 carries the S-methylmethionine modification.

It belongs to the methyltransferase superfamily. LaeA methyltransferase family. In terms of assembly, component of the heterotrimeric velvet complex composed of laeA, veA and velB; VeA acting as a bridging protein between laeA and velB. In terms of processing, self-methylates at Met-207.

The protein resides in the nucleus. It catalyses the reaction L-methionyl-[protein] + S-adenosyl-L-methionine = S-methyl-L-methionyl-[protein] + S-adenosyl-L-homocysteine. Its function is as follows. Methyltransferase that performs automethylation at Met-207. No other methyl-accepting substrate has been identified yet. Component of the velvet transcription factor complex that acts as a global regulator for secondary metabolite gene expression. Controls the expression of the sterigmatocystin, penicillin, and lovastatin gene clusters. Controls light-dependent formation of the velB-vosA complex, veA protein modification, and is required for light-mediated inhibition of sexual development. Within the velvet complex, controls light-dependent secondary metabolism. Involved in the defense response against Drosophila melanogaster larval grazing. The chain is Secondary metabolism regulator laeA from Emericella nidulans (Aspergillus nidulans).